A 66-amino-acid chain; its full sequence is MAKGKDVRVTIILECTNCVRNDIKKESPGISRYITQKNRHNTPSRLELRKFCPYCYKHTIHGEIKK.

Belongs to the bacterial ribosomal protein bL33 family.

The protein localises to the plastid. It is found in the chloroplast. This is Large ribosomal subunit protein bL33c from Aethionema grandiflorum (Persian stone-cress).